The chain runs to 291 residues: Ribosomal RNA small subunit methyltransferase H (291 aa).

Residues 36–38, Asp-55, Leu-88, Asp-102, and Gln-109 contribute to the S-adenosyl-L-methionine site; that span reads GGH. The interval 268 to 291 is disordered; it reads KPTQEETKNNPRARSAKLRVAERI.

It belongs to the methyltransferase superfamily. RsmH family.

Its subcellular location is the cytoplasm. The enzyme catalyses cytidine(1402) in 16S rRNA + S-adenosyl-L-methionine = N(4)-methylcytidine(1402) in 16S rRNA + S-adenosyl-L-homocysteine + H(+). Specifically methylates the N4 position of cytidine in position 1402 (C1402) of 16S rRNA. This chain is Ribosomal RNA small subunit methyltransferase H, found in Thermosipho melanesiensis (strain DSM 12029 / CIP 104789 / BI429).